Reading from the N-terminus, the 334-residue chain is Glycerol-3-phosphate dehydrogenase [NAD(P)+] (334 aa).

Positions 13, 33, and 106 each coordinate NADPH. Lys106, Gly137, and Ser139 together coordinate sn-glycerol 3-phosphate. Ala141 contacts NADPH. The sn-glycerol 3-phosphate site is built by Lys192, Asp245, Ser255, Arg256, and Asn257. Catalysis depends on Lys192, which acts as the Proton acceptor. Arg256 contacts NADPH. Positions 280 and 282 each coordinate NADPH.

The protein belongs to the NAD-dependent glycerol-3-phosphate dehydrogenase family.

The protein localises to the cytoplasm. It carries out the reaction sn-glycerol 3-phosphate + NAD(+) = dihydroxyacetone phosphate + NADH + H(+). The catalysed reaction is sn-glycerol 3-phosphate + NADP(+) = dihydroxyacetone phosphate + NADPH + H(+). It participates in membrane lipid metabolism; glycerophospholipid metabolism. Its function is as follows. Catalyzes the reduction of the glycolytic intermediate dihydroxyacetone phosphate (DHAP) to sn-glycerol 3-phosphate (G3P), the key precursor for phospholipid synthesis. This Chlamydia abortus (strain DSM 27085 / S26/3) (Chlamydophila abortus) protein is Glycerol-3-phosphate dehydrogenase [NAD(P)+].